Here is a 75-residue protein sequence, read N- to C-terminus: uncharacterized protein (75 aa).

A helical transmembrane segment spans residues 49-69; sequence VDIVAVATTLPFIVAVICIVF.

Its subcellular location is the host membrane. This is an uncharacterized protein from Saccharolobus islandicus (Sulfolobus islandicus).